Here is a 350-residue protein sequence, read N- to C-terminus: Sodium/calcium exchanger MaX1 (350 aa).

10 consecutive transmembrane segments (helical) span residues 4–24 (VNFL…DYFV), 39–59 (FVIG…ASSI), 69–89 (IVIG…VGVA), 101–121 (MLKR…VFAF), 125–145 (LSML…FFLF), 202–222 (GGFA…VIGA), 242–264 (VIGT…VSAA), 276–296 (VIGS…LFYP), 302–322 (MSLF…LIFI), and 330–350 (RWEG…LFYI).

This sequence belongs to the Ca(2+):cation antiporter (CaCA) (TC 2.A.19) family.

Its subcellular location is the cell membrane. Its activity is regulated as follows. Calcium transport is inhibited by Na(+), K(+), Li(+), Mg(2+) or Mn(2+). Functionally, catalyzes Na(+)/Ca(2+) exchange. The transport is electrogenic with a likely stoichiometry of 3 or more Na(+) for each Ca(2+). Is K(+)-independent. The polypeptide is Sodium/calcium exchanger MaX1 (maX1) (Methanosarcina acetivorans (strain ATCC 35395 / DSM 2834 / JCM 12185 / C2A)).